A 242-amino-acid chain; its full sequence is Biosynthetic peptidoglycan transglycosylase (242 aa).

The chain crosses the membrane as a helical span at residues 19-39 (LMVVLAIFWGGGIALFSVAPV).

Belongs to the glycosyltransferase 51 family.

Its subcellular location is the cell inner membrane. The catalysed reaction is [GlcNAc-(1-&gt;4)-Mur2Ac(oyl-L-Ala-gamma-D-Glu-L-Lys-D-Ala-D-Ala)](n)-di-trans,octa-cis-undecaprenyl diphosphate + beta-D-GlcNAc-(1-&gt;4)-Mur2Ac(oyl-L-Ala-gamma-D-Glu-L-Lys-D-Ala-D-Ala)-di-trans,octa-cis-undecaprenyl diphosphate = [GlcNAc-(1-&gt;4)-Mur2Ac(oyl-L-Ala-gamma-D-Glu-L-Lys-D-Ala-D-Ala)](n+1)-di-trans,octa-cis-undecaprenyl diphosphate + di-trans,octa-cis-undecaprenyl diphosphate + H(+). It participates in cell wall biogenesis; peptidoglycan biosynthesis. Functionally, peptidoglycan polymerase that catalyzes glycan chain elongation from lipid-linked precursors. The chain is Biosynthetic peptidoglycan transglycosylase from Escherichia coli O127:H6 (strain E2348/69 / EPEC).